Consider the following 309-residue polypeptide: Protoheme IX farnesyltransferase (309 aa).

Helical transmembrane passes span 35 to 55, 64 to 84, 114 to 134, 135 to 155, 161 to 181, 187 to 207, 236 to 256, 257 to 277, and 289 to 309; these read IGIV…ALYF, LHIV…SCSI, VLWL…MTTV, TAAI…TMWS, LNTV…WTAV, VVPL…FLAL, IVVW…LGVP, FLTV…YGFK, and FIYS…ATLW.

The protein belongs to the UbiA prenyltransferase family. Protoheme IX farnesyltransferase subfamily. In terms of assembly, interacts with CtaA.

The protein localises to the cell membrane. It carries out the reaction heme b + (2E,6E)-farnesyl diphosphate + H2O = Fe(II)-heme o + diphosphate. Its pathway is porphyrin-containing compound metabolism; heme O biosynthesis; heme O from protoheme: step 1/1. In terms of biological role, converts heme B (protoheme IX) to heme O by substitution of the vinyl group on carbon 2 of heme B porphyrin ring with a hydroxyethyl farnesyl side group. The sequence is that of Protoheme IX farnesyltransferase from Geobacillus sp. (strain WCH70).